We begin with the raw amino-acid sequence, 490 residues long: 53 kDa membrane antigen A (490 aa).

Residues 1–16 (MKKKLFFALLVLILSS) form the signal peptide. A lipid anchor (N-palmitoyl cysteine) is attached at C17. A lipid anchor (S-diacylglycerol cysteine) is attached at C17.

Its subcellular location is the cell membrane. In Treponema denticola, this protein is 53 kDa membrane antigen A (tdpA).